Reading from the N-terminus, the 443-residue chain is Xaa-Pro dipeptidase (443 aa).

Residues D246, D257, H339, E384, and E423 each contribute to the Mn(2+) site.

It belongs to the peptidase M24B family. Bacterial-type prolidase subfamily. It depends on Mn(2+) as a cofactor.

The catalysed reaction is Xaa-L-Pro dipeptide + H2O = an L-alpha-amino acid + L-proline. Splits dipeptides with a prolyl residue in the C-terminal position. The protein is Xaa-Pro dipeptidase of Escherichia coli O8 (strain IAI1).